The chain runs to 378 residues: Erythronate-4-phosphate dehydrogenase (378 aa).

The substrate site is built by Ser-45 and Thr-66. The NAD(+) site is built by Asp-146 and Thr-175. Residue Arg-208 is part of the active site. Asp-232 is an NAD(+) binding site. Glu-237 is an active-site residue. His-254 functions as the Proton donor in the catalytic mechanism. Gly-257 provides a ligand contact to NAD(+). A substrate-binding site is contributed by Tyr-258.

The protein belongs to the D-isomer specific 2-hydroxyacid dehydrogenase family. PdxB subfamily. Homodimer.

The protein resides in the cytoplasm. The catalysed reaction is 4-phospho-D-erythronate + NAD(+) = (R)-3-hydroxy-2-oxo-4-phosphooxybutanoate + NADH + H(+). Its pathway is cofactor biosynthesis; pyridoxine 5'-phosphate biosynthesis; pyridoxine 5'-phosphate from D-erythrose 4-phosphate: step 2/5. Its function is as follows. Catalyzes the oxidation of erythronate-4-phosphate to 3-hydroxy-2-oxo-4-phosphonooxybutanoate. In Escherichia coli O81 (strain ED1a), this protein is Erythronate-4-phosphate dehydrogenase.